The primary structure comprises 540 residues: NEDD8-activating enzyme E1 regulatory subunit AXR1 (540 aa).

This sequence belongs to the ubiquitin-activating E1 family. ULA1 subfamily. Heterodimer of ECR1 and AXR1. The complex binds to RUB1/NEDD8 and RCE1. Expressed in shoot, root and floral meristems, in vascular tissues of cotyledons and mature leaves, and in the stele of the root. Expressed at higher levels on the lower side of an emerging root during germination and at higher levels on the underside of the apical hook.

The protein localises to the nucleus. The protein operates within protein modification; protein neddylation. Its function is as follows. Regulatory subunit of the dimeric ECR1-AXR1 E1 enzyme. E1 activates RUB1/NEDD8 by first adenylating its C-terminal glycine residue with ATP, thereafter linking this residue to the side chain of the catalytic cysteine, yielding a RUB1-ECR1 thioester and free AMP. E1 finally transfers RUB1 to the catalytic cysteine of RCE1. Plays an important role in auxin response. Regulates the chromosomal localization of meiotic recombination by crossovers (COs) and subsequent synapsis, probably through the activation of a CRL4 complex. Required for E3-mediated protein degradation in response to auxin, jasmonic acid and cold stress. Required for the COP1-COP10-CSN-mediated repression of photomorphogenesis in the dark. May function redundantly with AXL1 in the RUB conjugating pathway. Seems not to be functionally equivalent to AXL1 in vivo. This chain is NEDD8-activating enzyme E1 regulatory subunit AXR1, found in Arabidopsis thaliana (Mouse-ear cress).